We begin with the raw amino-acid sequence, 277 residues long: Glutamate racemase (277 aa).

Substrate-binding positions include 9–10 and 41–42; these read DS and YG. The Proton donor/acceptor role is filled by C73. Residue 74–75 participates in substrate binding; the sequence is NT. The Proton donor/acceptor role is filled by C183. 184 to 185 serves as a coordination point for substrate; that stretch reads TH.

Belongs to the aspartate/glutamate racemases family.

It catalyses the reaction L-glutamate = D-glutamate. It participates in cell wall biogenesis; peptidoglycan biosynthesis. Functionally, provides the (R)-glutamate required for cell wall biosynthesis. The chain is Glutamate racemase from Shewanella denitrificans (strain OS217 / ATCC BAA-1090 / DSM 15013).